The chain runs to 288 residues: Lipoyl synthase (288 aa).

Residues Cys39, Cys44, Cys50, Cys65, Cys69, Cys72, and Ser276 each contribute to the [4Fe-4S] cluster site. Residues 51 to 265 form the Radical SAM core domain; it reads WGKGTATFMI…KETGLKKGFE (215 aa).

It belongs to the radical SAM superfamily. Lipoyl synthase family. The cofactor is [4Fe-4S] cluster.

It localises to the cytoplasm. The catalysed reaction is [[Fe-S] cluster scaffold protein carrying a second [4Fe-4S](2+) cluster] + N(6)-octanoyl-L-lysyl-[protein] + 2 oxidized [2Fe-2S]-[ferredoxin] + 2 S-adenosyl-L-methionine + 4 H(+) = [[Fe-S] cluster scaffold protein] + N(6)-[(R)-dihydrolipoyl]-L-lysyl-[protein] + 4 Fe(3+) + 2 hydrogen sulfide + 2 5'-deoxyadenosine + 2 L-methionine + 2 reduced [2Fe-2S]-[ferredoxin]. Its pathway is protein modification; protein lipoylation via endogenous pathway; protein N(6)-(lipoyl)lysine from octanoyl-[acyl-carrier-protein]: step 2/2. In terms of biological role, catalyzes the radical-mediated insertion of two sulfur atoms into the C-6 and C-8 positions of the octanoyl moiety bound to the lipoyl domains of lipoate-dependent enzymes, thereby converting the octanoylated domains into lipoylated derivatives. This is Lipoyl synthase from Bacteroides fragilis (strain YCH46).